A 424-amino-acid chain; its full sequence is Tol-Pal system protein TolB (424 aa).

A signal peptide spans 1 to 16 (MKQLLVLILSLYTTLA).

It belongs to the TolB family. The Tol-Pal system is composed of five core proteins: the inner membrane proteins TolA, TolQ and TolR, the periplasmic protein TolB and the outer membrane protein Pal. They form a network linking the inner and outer membranes and the peptidoglycan layer.

Its subcellular location is the periplasm. In terms of biological role, part of the Tol-Pal system, which plays a role in outer membrane invagination during cell division and is important for maintaining outer membrane integrity. This chain is Tol-Pal system protein TolB, found in Ruthia magnifica subsp. Calyptogena magnifica.